A 145-amino-acid chain; its full sequence is Hemoglobin subunit beta (145 aa).

The region spanning 1–145 (MLTAEEKAAV…VANALAHRYH (145 aa)) is the Globin domain. Thr-11 carries the phosphothreonine modification. Ser-43 carries the phosphoserine modification. Lys-58 carries the post-translational modification N6-acetyllysine. His-62 is a heme b binding site. An N6-acetyllysine modification is found at Lys-81. His-91 is a heme b binding site. Position 92 is an S-nitrosocysteine (Cys-92).

It belongs to the globin family. As to quaternary structure, heterotetramer of two alpha chains and two beta chains. As to expression, red blood cells.

Its function is as follows. Involved in oxygen transport from the lung to the various peripheral tissues. In Tragelaphus strepsiceros (Greater kudu), this protein is Hemoglobin subunit beta (HBB).